Consider the following 180-residue polypeptide: Large ribosomal subunit protein uL6 (180 aa).

It belongs to the universal ribosomal protein uL6 family. Part of the 50S ribosomal subunit.

Its function is as follows. This protein binds to the 23S rRNA, and is important in its secondary structure. It is located near the subunit interface in the base of the L7/L12 stalk, and near the tRNA binding site of the peptidyltransferase center. The sequence is that of Large ribosomal subunit protein uL6 from Bdellovibrio bacteriovorus (strain ATCC 15356 / DSM 50701 / NCIMB 9529 / HD100).